The chain runs to 158 residues: Phosphopantetheine adenylyltransferase (158 aa).

Substrate is bound at residue Thr10. Residues 10 to 11 (TF) and His18 contribute to the ATP site. Substrate contacts are provided by Lys42, Leu74, and Arg88. ATP-binding positions include 89–91 (GLR), Glu99, and 124–130 (NSFISST).

It belongs to the bacterial CoaD family. Homohexamer. The cofactor is Mg(2+).

It is found in the cytoplasm. It catalyses the reaction (R)-4'-phosphopantetheine + ATP + H(+) = 3'-dephospho-CoA + diphosphate. The protein operates within cofactor biosynthesis; coenzyme A biosynthesis; CoA from (R)-pantothenate: step 4/5. Its function is as follows. Reversibly transfers an adenylyl group from ATP to 4'-phosphopantetheine, yielding dephospho-CoA (dPCoA) and pyrophosphate. This chain is Phosphopantetheine adenylyltransferase, found in Shewanella sediminis (strain HAW-EB3).